The sequence spans 249 residues: Very-long-chain (3R)-3-hydroxyacyl-CoA dehydratase 1 (249 aa).

The disordered stretch occupies residues 1 to 22; the sequence is MASSEEDGTNGGASEAGEEKEA. Residues 1–36 are Cytoplasmic-facing; the sequence is MASSEEDGTNGGASEAGEEKEAPGRRRRLGLLATVW. A helical transmembrane segment spans residues 37–56; that stretch reads LTFYNIAMTAGWLVLAIAMV. Topologically, residues 57–75 are lumenal; it reads RFYMEKGTHKGLYKSIQKT. The helical transmembrane segment at 76–92 threads the bilayer; that stretch reads LKFFQTFALLEIVHCLI. Residues 93-102 lie on the Cytoplasmic side of the membrane; the sequence is GIVPTSVIVA. A helical membrane pass occupies residues 103 to 120; the sequence is GVQVSSRIFMVWLITHSI. Over 121–126 the chain is Lumenal; it reads KPIQNE. A helical transmembrane segment spans residues 127-141; the sequence is ESVVLFLVAWTVTEI. At 142–164 the chain is on the cytoplasmic side; the sequence is TRYSFYTFSLLDHLPYFIKWARY. A helical transmembrane segment spans residues 165–182; the sequence is NFFIILYPVGVVGELLTI. Residues Tyr-171 and Glu-178 contribute to the active site. At 183–212 the chain is on the lumenal side; that stretch reads YAALPYVKKTGMFSIRLPNKYNVSFDYYYF. The N-linked (GlcNAc...) asparagine glycan is linked to Asn-204. The helical transmembrane segment at 213–230 threads the bilayer; the sequence is LLITMASYIPLFPQLYFH. At 231-249 the chain is on the cytoplasmic side; the sequence is MLRQRRKVLHGEVIVEKDD.

It belongs to the very long-chain fatty acids dehydratase HACD family. As to quaternary structure, may interact with enzymes of the ELO family (including ELOVL1); with those enzymes that mediate condensation, the first of the four steps of the reaction cycle responsible for fatty acids elongation, may be part of a larger fatty acids elongase complex. Interacts with TECR. Skeletal muscle.

The protein localises to the endoplasmic reticulum membrane. It carries out the reaction a very-long-chain (3R)-3-hydroxyacyl-CoA = a very-long-chain (2E)-enoyl-CoA + H2O. The catalysed reaction is (3R)-hydroxyhexadecanoyl-CoA = (2E)-hexadecenoyl-CoA + H2O. It catalyses the reaction (3R)-hydroxyoctadecanoyl-CoA = (2E)-octadecenoyl-CoA + H2O. The enzyme catalyses (3R)-hydroxyeicosanoyl-CoA = (2E)-eicosenoyl-CoA + H2O. It carries out the reaction (3R)-hydroxydocosanoyl-CoA = (2E)-docosenoyl-CoA + H2O. The catalysed reaction is (3R)-hydroxytetracosanoyl-CoA = (2E)-tetracosenoyl-CoA + H2O. It catalyses the reaction (3R)-hydroxyhexacosanoyl-CoA = (2E)-hexacosenoyl-CoA + H2O. Its pathway is lipid metabolism; fatty acid biosynthesis. Its function is as follows. Catalyzes the third of the four reactions of the long-chain fatty acids elongation cycle. This endoplasmic reticulum-bound enzymatic process, allows the addition of two carbons to the chain of long- and very long-chain fatty acids/VLCFAs per cycle. This enzyme catalyzes the dehydration of the 3-hydroxyacyl-CoA intermediate into trans-2,3-enoyl-CoA, within each cycle of fatty acid elongation. Thereby, it participates in the production of VLCFAs of different chain lengths that are involved in multiple biological processes as precursors of membrane lipids and lipid mediators. This is Very-long-chain (3R)-3-hydroxyacyl-CoA dehydratase 1 (HACD1) from Canis lupus familiaris (Dog).